Here is a 550-residue protein sequence, read N- to C-terminus: CTP synthase (550 aa).

Residues 1 to 270 (MTKFVFVTGG…DRLICEELRL (270 aa)) are amidoligase domain. CTP is bound at residue serine 13. Serine 13 contributes to the UTP binding site. Residues 14-19 (SLGKGI) and aspartate 71 contribute to the ATP site. Residues aspartate 71 and glutamate 144 each contribute to the Mg(2+) site. Residues 151–153 (DIE), 191–196 (KTKPTQ), and lysine 227 contribute to the CTP site. Residues 191-196 (KTKPTQ) and lysine 227 contribute to the UTP site. In terms of domain architecture, Glutamine amidotransferase type-1 spans 295-547 (TIGMVGKYVD…VEAALAGQQR (253 aa)). L-glutamine is bound at residue glycine 356. Cysteine 383 acts as the Nucleophile; for glutamine hydrolysis in catalysis. L-glutamine-binding positions include 384 to 387 (LGMQ), glutamate 407, and arginine 473. Catalysis depends on residues histidine 520 and glutamate 522.

Belongs to the CTP synthase family. Homotetramer.

It carries out the reaction UTP + L-glutamine + ATP + H2O = CTP + L-glutamate + ADP + phosphate + 2 H(+). It catalyses the reaction L-glutamine + H2O = L-glutamate + NH4(+). The enzyme catalyses UTP + NH4(+) + ATP = CTP + ADP + phosphate + 2 H(+). The protein operates within pyrimidine metabolism; CTP biosynthesis via de novo pathway; CTP from UDP: step 2/2. Its activity is regulated as follows. Allosterically activated by GTP, when glutamine is the substrate; GTP has no effect on the reaction when ammonia is the substrate. The allosteric effector GTP functions by stabilizing the protein conformation that binds the tetrahedral intermediate(s) formed during glutamine hydrolysis. Inhibited by the product CTP, via allosteric rather than competitive inhibition. In terms of biological role, catalyzes the ATP-dependent amination of UTP to CTP with either L-glutamine or ammonia as the source of nitrogen. Regulates intracellular CTP levels through interactions with the four ribonucleotide triphosphates. This Cupriavidus pinatubonensis (strain JMP 134 / LMG 1197) (Cupriavidus necator (strain JMP 134)) protein is CTP synthase.